The sequence spans 971 residues: Reversion-inducing cysteine-rich protein with Kazal motifs (971 aa).

Positions 1-22 (MATVRASLRGALLLLLAVAGVA) are cleaved as a signal peptide. A Knot 1 repeat occupies 37–84 (CCNHSKDNQMCRDVCEQIFSSKSESRLKHLLQRAPDYCPETMVEIWNC). Positions 37–338 (CCNHSKDNQM…NPVEVSMLTC (302 aa)) are 5 X Knot repeats. Residues asparagine 39 and asparagine 86 are each glycosylated (N-linked (GlcNAc...) asparagine). 2 Knot repeats span residues 104 to 141 (CCELAIALECRQACKQASSKNDISKVCRKEYENALFSC) and 151 to 197 (CCSY…LIHC). Asparagine 200 carries N-linked (GlcNAc...) asparagine glycosylation. Knot repeat units lie at residues 216–263 (CCDR…LWQC) and 292–338 (CCSK…MLTC). N-linked (GlcNAc...) asparagine glycosylation is found at asparagine 297 and asparagine 352. Kazal-like domains are found at residues 627–673 (TFTG…SCMS), 698–752 (TFDK…PCQP), and 753–789 (FCRATEPVCGHNGETYSSVCAAYSDRVAVDYYGDCQA). Intrachain disulfides connect cysteine 633–cysteine 658, cysteine 635–cysteine 654, cysteine 643–cysteine 671, cysteine 716–cysteine 735, cysteine 724–cysteine 750, and cysteine 761–cysteine 787. Serine 942 carries the GPI-anchor amidated serine lipid modification. Positions 943-971 (AGVRARPSCHSLLLPLSLGLALHLLWTYN) are cleaved as a propeptide — removed in mature form.

This sequence belongs to the RECK family. As to quaternary structure, interacts (via knot repeats) with WNT7A (via disordered linker region); the interaction is direct. Interacts (via knot repeats) with WNT7B (via disordered linker region); the interaction is direct. Interacts with ADGRA2; the interaction is direct. Interacts with MMP9. N-glycosylated. As to expression, expressed in various tissues and untransformed cells. It is undetectable in tumor-derived cell lines and oncogenically transformed cells.

Its subcellular location is the cell membrane. Functionally, functions together with ADGRA2 to enable brain endothelial cells to selectively respond to Wnt7 signals (WNT7A or WNT7B). Plays a key role in Wnt7-specific responses: required for central nervous system (CNS) angiogenesis and blood-brain barrier regulation. Acts as a Wnt7-specific coactivator of canonical Wnt signaling by decoding Wnt ligands: acts by interacting specifically with the disordered linker region of Wnt7, thereby conferring ligand selectivity for Wnt7. ADGRA2 is then required to deliver RECK-bound Wnt7 to frizzled by assembling a higher-order RECK-ADGRA2-Fzd-LRP5-LRP6 complex. Also acts as a serine protease inhibitor: negatively regulates matrix metalloproteinase-9 (MMP9) by suppressing MMP9 secretion and by direct inhibition of its enzymatic activity. Also inhibits metalloproteinase activity of MMP2 and MMP14 (MT1-MMP). This chain is Reversion-inducing cysteine-rich protein with Kazal motifs, found in Homo sapiens (Human).